A 420-amino-acid polypeptide reads, in one-letter code: E3 ubiquitin protein ligase DRIP2 (420 aa).

An RING-type zinc finger spans residues 20 to 61; it reads CPLCDKLLRDATTISECLHTFCRKCIYEKITEDEIESCPVCD. Residues 113–123 are compositionally biased toward polar residues; the sequence is ISSLVVSTPRV. 2 disordered regions span residues 113–201 and 226–289; these read ISSL…KDVD and DPKS…TFGD. Basic and acidic residues predominate over residues 154-165; sequence KKEEEFGDDHVE. Polar residues-rich tracts occupy residues 166-194 and 232-242; these read SASSPETLKKFTQNKRQSSYANPNQSLSN and GNASHNDVQGS. Positions 244-253 are enriched in basic residues; sequence TKTKDHKRKC. The segment covering 260 to 273 has biased composition (polar residues); it reads SNNGDPTTSETATL. Basic residues predominate over residues 274–284; sequence KRTRRTRRKRS.

Interacts with DREB2A. Auto-ubiquitinated. Expressed in roots, leaves and flowers.

It carries out the reaction S-ubiquitinyl-[E2 ubiquitin-conjugating enzyme]-L-cysteine + [acceptor protein]-L-lysine = [E2 ubiquitin-conjugating enzyme]-L-cysteine + N(6)-ubiquitinyl-[acceptor protein]-L-lysine.. The protein operates within protein modification; protein ubiquitination. Its function is as follows. E3 ubiquitin-protein ligase that acts as a negative regulator of the response to water stress. Mediates ubiquitination and subsequent proteasomal degradation of the drought-induced transcriptional activator DREB2A. Functionally redundant with DRIP1. The chain is E3 ubiquitin protein ligase DRIP2 (DRIP2) from Arabidopsis thaliana (Mouse-ear cress).